Consider the following 96-residue polypeptide: Co-chaperonin GroES (96 aa).

This sequence belongs to the GroES chaperonin family. In terms of assembly, heptamer of 7 subunits arranged in a ring. Interacts with the chaperonin GroEL.

It is found in the cytoplasm. Its function is as follows. Together with the chaperonin GroEL, plays an essential role in assisting protein folding. The GroEL-GroES system forms a nano-cage that allows encapsulation of the non-native substrate proteins and provides a physical environment optimized to promote and accelerate protein folding. GroES binds to the apical surface of the GroEL ring, thereby capping the opening of the GroEL channel. This chain is Co-chaperonin GroES, found in Neisseria gonorrhoeae (strain ATCC 700825 / FA 1090).